The chain runs to 411 residues: METACERLHVAQETQMQLIEKASDKLQDHILYWTAVRTENTLLYAARKKGVTVLGHCRVPHSVVCQERAKQAIEMQLSLQELSKTEFGNEPWCLLDTSWDRYMSEPKRCFKKGARVVEVEFDGNASNTNWYTVYSKLYMRTEDGWQLAKAGADGTGLYYCTMAGAGRIYYSRFGEEAARFSTTGHYSVRDQDRVYAGVSSTSSDFRDRPDGVSASEGPEGDPAGKEAEPAQPVSSLLGSPACVPIRAGLGWVRDGPRPHPYHFPAGSGGSLLRSASTPVQGPVPVDLAPRQEEEENQSPDSTEEEPVTVPRHTSDADGFHLLKAGQSCFALISGSANQVKCYRFRVKKNHRHRYENCTTTSFTVADNGAERQGQAQILITFGSPGQRQDFLKHVPLPPGMNISGFTASLDF.

The interval 1-202 (METACERLHV…RVYAGVSSTS (202 aa)) is transactivation domain. Disordered regions lie at residues 197–237 (GVSS…SSLL) and 260–314 (PYHF…RHTS). Residues 292–306 (EEEENQSPDSTEEEP) show a composition bias toward acidic residues. The tract at residues 326–411 (QSCFALISGS…ISGFTASLDF (86 aa)) is DNA-binding domain.

Belongs to the papillomaviridae E2 protein family. Binds DNA as homodimer. Interacts with protein E1; this interaction greatly increases E1 DNA-binding activity. Interacts with protein L1; this interaction enhances E2-dependent replication and transcription activation. Interacts with protein L2; this interaction inhibits E2 transcriptional activity but not DNA replication function E2. Interacts with protein E7; this interaction inhibits E7 oncogenic activity. Interacts with host TAF1; this interaction modulates E2-dependent transcriptional regulation. Interacts with host BRD4; this interaction mediates E2 transcriptional activation function. Additionally, the interaction with host BRD4 on mitotic chromosomes mediates tethering of the viral genome. Interacts with host TOPBP1; this interaction is required for optimal viral DNA replication. Phosphorylated.

The protein resides in the host nucleus. Functionally, plays a role in the initiation of viral DNA replication. A dimer of E2 interacts with a dimer of E1 in order to improve specificity of E1 DNA binding activity. Once the complex recognizes and binds DNA at specific sites, the E2 dimer is removed from DNA. E2 also regulates viral transcription through binding to the E2RE response element (5'-ACCNNNNNNGGT-3') present in multiple copies in the regulatory regions of the viral genome. Activates or represses transcription depending on E2RE's position with regards to proximal promoter elements including the TATA-box. Repression occurs by sterically hindering the assembly of the transcription initiation complex. The sequence is that of Regulatory protein E2 from Bos taurus papillomavirus 2 (Bovine papillomavirus 2).